A 185-amino-acid polypeptide reads, in one-letter code: Anaphase-promoting complex subunit 10 (185 aa).

N-acetylthreonine is present on Thr-2. Residues Thr-2 to Arg-185 form the DOC domain. Residue Lys-169 is modified to N6-acetyllysine.

This sequence belongs to the APC10 family. In terms of assembly, the mammalian APC/C is composed at least of 14 distinct subunits ANAPC1, ANAPC2, CDC27/APC3, ANAPC4, ANAPC5, CDC16/APC6, ANAPC7, CDC23/APC8, ANAPC10, ANAPC11, CDC26/APC12, ANAPC13, ANAPC15 and ANAPC16 that assemble into a complex of at least 19 chains with a combined molecular mass of around 1.2 MDa; APC/C interacts with FZR1 and FBXO5. The C-terminus of APC10 binds to CDC27/APC3. Interacts with PIWIL1; interaction only takes place when PIWIL1 binds piRNA. Interacts with FBXO43; the interaction is direct.

The protein operates within protein modification; protein ubiquitination. In terms of biological role, component of the anaphase promoting complex/cyclosome (APC/C), a cell cycle-regulated E3 ubiquitin ligase that controls progression through mitosis and the G1 phase of the cell cycle. The APC/C complex acts by mediating ubiquitination and subsequent degradation of target proteins: it mainly mediates the formation of 'Lys-11'-linked polyubiquitin chains and, to a lower extent, the formation of 'Lys-48'- and 'Lys-63'-linked polyubiquitin chains. The APC/C complex catalyzes assembly of branched 'Lys-11'-/'Lys-48'-linked branched ubiquitin chains on target proteins. The protein is Anaphase-promoting complex subunit 10 (ANAPC10) of Homo sapiens (Human).